Reading from the N-terminus, the 312-residue chain is Pyrimidine-specific ribonucleoside hydrolase RihA (312 aa).

The active site involves His-240.

This sequence belongs to the IUNH family. RihA subfamily.

Its function is as follows. Hydrolyzes cytidine or uridine to ribose and cytosine or uracil, respectively. The sequence is that of Pyrimidine-specific ribonucleoside hydrolase RihA from Shewanella woodyi (strain ATCC 51908 / MS32).